A 112-amino-acid chain; its full sequence is Nitrogen regulatory protein P-II (112 aa).

Y51 carries the O-UMP-tyrosine modification.

It belongs to the P(II) protein family. In terms of assembly, homotrimer.

Functionally, in nitrogen-limiting conditions, when the ratio of Gln to 2-ketoglutarate decreases, P-II is uridylylated to P-II-UMP. P-II-UMP allows the deadenylation of glutamine synthetase (GS), thus activating the enzyme. Conversely, in nitrogen excess P-II is deuridylated and promotes the adenylation of GS. P-II indirectly controls the transcription of the GS gene (glnA). P-II prevents NR-II-catalyzed conversion of NR-I to NR-I-phosphate, the transcriptional activator of glnA. When P-II is uridylylated to P-II-UMP, these events are reversed. This Azospirillum brasilense protein is Nitrogen regulatory protein P-II (glnB).